Consider the following 507-residue polypeptide: ATP synthase subunit alpha, mitochondrial (507 aa).

171-178 (GDRQTGKT) is an ATP binding site.

The protein belongs to the ATPase alpha/beta chains family. In terms of assembly, F-type ATPases have 2 components, CF(1) - the catalytic core - and CF(0) - the membrane proton channel. CF(1) has five subunits: alpha(3), beta(3), gamma(1), delta(1), epsilon(1). CF(0) has three main subunits: a, b and c.

It localises to the mitochondrion. The protein localises to the mitochondrion inner membrane. Mitochondrial membrane ATP synthase (F(1)F(0) ATP synthase or Complex V) produces ATP from ADP in the presence of a proton gradient across the membrane which is generated by electron transport complexes of the respiratory chain. F-type ATPases consist of two structural domains, F(1) - containing the extramembraneous catalytic core, and F(0) - containing the membrane proton channel, linked together by a central stalk and a peripheral stalk. During catalysis, ATP synthesis in the catalytic domain of F(1) is coupled via a rotary mechanism of the central stalk subunits to proton translocation. Subunits alpha and beta form the catalytic core in F(1). Rotation of the central stalk against the surrounding alpha(3)beta(3) subunits leads to hydrolysis of ATP in three separate catalytic sites on the beta subunits. Subunit alpha does not bear the catalytic high-affinity ATP-binding sites. This Brassica napus (Rape) protein is ATP synthase subunit alpha, mitochondrial (ATPA).